An 802-amino-acid chain; its full sequence is Copper-exporting P-type ATPase (802 aa).

2 HMA domains span residues 5–70 (KKTT…YGVA) and 72–138 (ETVE…YDAS). Residues Cys16, Cys19, Cys83, and Cys86 each coordinate Cu(+). Transmembrane regions (helical) follow at residues 161-181 (LIIS…HLFN), 192-212 (WFQF…FYVG), 224-244 (MDVL…YEMV), 256-276 (LYFE…YLEA), 411-431 (YFVP…ITLV), and 438-458 (PALV…LGLA). The 4-aspartylphosphate intermediate role is filled by Asp495. Residues Asp690 and Asp694 each contribute to the Mg(2+) site. Transmembrane regions (helical) follow at residues 748–767 (LFWA…LGLL) and 771–790 (VAGA…ALRL).

It belongs to the cation transport ATPase (P-type) (TC 3.A.3) family. Type IB subfamily.

It is found in the cell membrane. The catalysed reaction is Cu(+)(in) + ATP + H2O = Cu(+)(out) + ADP + phosphate + H(+). Its function is as follows. Involved in copper export. The chain is Copper-exporting P-type ATPase (copA) from Staphylococcus aureus (strain MW2).